We begin with the raw amino-acid sequence, 691 residues long: Probable E3 ubiquitin-protein ligase RHG1A (691 aa).

Disordered regions lie at residues 71-91 (SLGE…NEQR), 151-235 (GPGT…PRGM), 316-336 (SFVV…GSRT), 349-373 (VGGT…SRSI), and 395-501 (QSSR…MHNR). The segment covering 80-91 (TKDEASSHNEQR) has biased composition (basic and acidic residues). Polar residues-rich tracts occupy residues 204 to 213 (GESSSWTPGS) and 317 to 328 (FVVSRNPNSTPV). Basic and acidic residues predominate over residues 361–370 (RNLHLDETRS). Positions 395–406 (QSSRNVTNGNLN) are enriched in polar residues. Low complexity predominate over residues 407-419 (SASSVSRTGSTTS). Over residues 429–440 (NLAWTSYQNSPH) the composition is skewed to polar residues. Low complexity predominate over residues 454–465 (RSLLSSLAADAT). An RING-type; atypical zinc finger spans residues 637 to 678 (CCVCQEEYTEGEDMGTLECGHEFHSQCIKEWLKQKNLCPICK).

As to expression, expressed in stems, flowers, green siliques, cauline leaves, seeds and roots.

The catalysed reaction is S-ubiquitinyl-[E2 ubiquitin-conjugating enzyme]-L-cysteine + [acceptor protein]-L-lysine = [E2 ubiquitin-conjugating enzyme]-L-cysteine + N(6)-ubiquitinyl-[acceptor protein]-L-lysine.. It participates in protein modification; protein ubiquitination. Its function is as follows. Probable E3 ubiquitin-protein ligase that may possess E3 ubiquitin ligase activity in vitro. This is Probable E3 ubiquitin-protein ligase RHG1A from Arabidopsis thaliana (Mouse-ear cress).